We begin with the raw amino-acid sequence, 348 residues long: Anthranilate phosphoribosyltransferase (348 aa).

5-phospho-alpha-D-ribose 1-diphosphate-binding positions include Gly-81, 84-85 (GD), 91-94 (NVST), 109-117 (KHGNRAVSG), and Ser-121. Position 81 (Gly-81) interacts with anthranilate. Ser-93 lines the Mg(2+) pocket. Asn-112 lines the anthranilate pocket. Arg-167 serves as a coordination point for anthranilate. Positions 226 and 227 each coordinate Mg(2+).

This sequence belongs to the anthranilate phosphoribosyltransferase family. Homodimer. Requires Mg(2+) as cofactor.

It catalyses the reaction N-(5-phospho-beta-D-ribosyl)anthranilate + diphosphate = 5-phospho-alpha-D-ribose 1-diphosphate + anthranilate. It participates in amino-acid biosynthesis; L-tryptophan biosynthesis; L-tryptophan from chorismate: step 2/5. Its function is as follows. Catalyzes the transfer of the phosphoribosyl group of 5-phosphorylribose-1-pyrophosphate (PRPP) to anthranilate to yield N-(5'-phosphoribosyl)-anthranilate (PRA). This chain is Anthranilate phosphoribosyltransferase, found in Ectopseudomonas mendocina (strain ymp) (Pseudomonas mendocina).